We begin with the raw amino-acid sequence, 163 residues long: Nitrogen regulatory protein (163 aa).

The PTS EIIA type-2 domain maps to 12-156 (SVLNRECTRS…EELYQIITDT (145 aa)). His73 serves as the catalytic Tele-phosphohistidine intermediate.

It localises to the cytoplasm. In terms of biological role, seems to have a role in regulating nitrogen assimilation. This chain is Nitrogen regulatory protein (ptsN), found in Escherichia coli (strain K12).